Reading from the N-terminus, the 454-residue chain is Serine/arginine (SR)-type shuttling mRNA binding protein HRB1 (454 aa).

The tract at residues 1 to 141 (MSDQERGSEN…SSGARGDYGP (141 aa)) is disordered. Basic residues predominate over residues 14 to 24 (SRSRSRSPVRR). Basic and acidic residues-rich tracts occupy residues 25 to 38 (RMSD…DNHL) and 50 to 113 (KFAD…DYPR). Arg-127 carries the omega-N-methylarginine modification. RRM domains lie at 161–237 (NSIF…QDNP) and 261–338 (HEVI…SKES). 3 positions are modified to phosphoserine: Ser-338, Ser-343, and Ser-355. In terms of domain architecture, RRM 3 spans 376–453 (RLIYCSNLPF…CDLDISYAKR (78 aa)).

In terms of processing, methylated by HMT1.

The protein localises to the cytoplasm. Its subcellular location is the nucleus. The protein resides in the P-body. It localises to the stress granule. In terms of biological role, binds to intron-containing transcripts and is involved in quality control for the export of spliced mRNAs from the nucleus. Binds to pre-mRNAs until splicing is completed or until faulty mRNAs are degraded. On correctly spliced mRNAs, GBP2 and HRB1 recruit MEX67 to allow nuclear export. On faulty mRNAs, GBP2 and HRB1 associate with the TRAMP complex that guides those pre-mRNAs to the exosome for degradation. The chain is Serine/arginine (SR)-type shuttling mRNA binding protein HRB1 from Saccharomyces cerevisiae (strain ATCC 204508 / S288c) (Baker's yeast).